Reading from the N-terminus, the 468-residue chain is 6-phosphogluconate dehydrogenase, decarboxylating (468 aa).

Residues 10-15 (GMAVMG), 33-35 (NRS), 74-76 (VKA), and asparagine 102 contribute to the NADP(+) site. Substrate is bound by residues asparagine 102 and 128–130 (SGG). Lysine 183 serves as the catalytic Proton acceptor. Residue 186 to 187 (HN) participates in substrate binding. Glutamate 190 acts as the Proton donor in catalysis. 5 residues coordinate substrate: tyrosine 191, lysine 260, arginine 287, arginine 445, and histidine 451.

This sequence belongs to the 6-phosphogluconate dehydrogenase family. In terms of assembly, homodimer.

The catalysed reaction is 6-phospho-D-gluconate + NADP(+) = D-ribulose 5-phosphate + CO2 + NADPH. It participates in carbohydrate degradation; pentose phosphate pathway; D-ribulose 5-phosphate from D-glucose 6-phosphate (oxidative stage): step 3/3. Catalyzes the oxidative decarboxylation of 6-phosphogluconate to ribulose 5-phosphate and CO(2), with concomitant reduction of NADP to NADPH. The polypeptide is 6-phosphogluconate dehydrogenase, decarboxylating (gnd) (Escherichia coli (strain K12)).